A 264-amino-acid chain; its full sequence is 3-methyl-2-oxobutanoate hydroxymethyltransferase (264 aa).

Residues Asp45 and Asp84 each contribute to the Mg(2+) site. 3-methyl-2-oxobutanoate contacts are provided by residues 45–46 (DS), Asp84, and Lys112. Residue Glu114 coordinates Mg(2+). Glu181 functions as the Proton acceptor in the catalytic mechanism.

The protein belongs to the PanB family. Homodecamer; pentamer of dimers. It depends on Mg(2+) as a cofactor.

The protein resides in the cytoplasm. It carries out the reaction 3-methyl-2-oxobutanoate + (6R)-5,10-methylene-5,6,7,8-tetrahydrofolate + H2O = 2-dehydropantoate + (6S)-5,6,7,8-tetrahydrofolate. It participates in cofactor biosynthesis; (R)-pantothenate biosynthesis; (R)-pantoate from 3-methyl-2-oxobutanoate: step 1/2. In terms of biological role, catalyzes the reversible reaction in which hydroxymethyl group from 5,10-methylenetetrahydrofolate is transferred onto alpha-ketoisovalerate to form ketopantoate. The protein is 3-methyl-2-oxobutanoate hydroxymethyltransferase of Cronobacter sakazakii (strain ATCC BAA-894) (Enterobacter sakazakii).